The sequence spans 68 residues: Molybdenum-pterin-binding protein 2 (68 aa).

The Mop domain occupies 2–68; it reads SISARNQLKG…VKSTDVMILA (67 aa).

In terms of biological role, binds one mole of molybdenum per mole of protein and contains a pterin. The protein is Molybdenum-pterin-binding protein 2 (mopII) of Clostridium pasteurianum.